Reading from the N-terminus, the 122-residue chain is Biogenesis of lysosome-related organelles complex 1 subunit CNL1 (122 aa).

Over residues 1–10 the composition is skewed to basic and acidic residues; that stretch reads MQDNSSHSRE. A disordered region spans residues 1–21; sequence MQDNSSHSRESASAGDDPLGI. Residues 63-95 adopt a coiled-coil conformation; it reads ENTIDKNIAKFKELLEKCDTLENHYEMLNQLAI.

This sequence belongs to the BLOC1S4 family. Component of the biogenesis of lysosome-related organelles complex-1 (BLOC-1) composed of at least BLI1, BLS1, CNL1, KXD1, SNN1 and VAB2.

The protein localises to the cytoplasm. In terms of biological role, component of the biogenesis of lysosome-related organelles complex-1 (BLOC-1), a complex that is involved in endosomal cargo sorting. This is Biogenesis of lysosome-related organelles complex 1 subunit CNL1 (CLN1) from Saccharomyces cerevisiae (strain RM11-1a) (Baker's yeast).